Here is a 232-residue protein sequence, read N- to C-terminus: Orotidine 5'-phosphate decarboxylase (232 aa).

Substrate-binding positions include D13, K35, 62-71, T121, R182, Q191, G211, and R212; that span reads DLKFHDIPNT. The active-site Proton donor is the K64.

It belongs to the OMP decarboxylase family. Type 1 subfamily. In terms of assembly, homodimer.

The enzyme catalyses orotidine 5'-phosphate + H(+) = UMP + CO2. The protein operates within pyrimidine metabolism; UMP biosynthesis via de novo pathway; UMP from orotate: step 2/2. Catalyzes the decarboxylation of orotidine 5'-monophosphate (OMP) to uridine 5'-monophosphate (UMP). This chain is Orotidine 5'-phosphate decarboxylase, found in Acinetobacter baumannii (strain AB0057).